Consider the following 385-residue polypeptide: Circadian-associated transcriptional repressor (385 aa).

A compositionally biased stretch (low complexity) spans 1-26 (MDSPSSVSSYSSYSLSSSFPTSPVNS). Disordered regions lie at residues 1–108 (MDSP…SLNT), 203–233 (GGGK…EKMD), and 365–385 (GHRE…LLNL). Residues 33-45 (DSEREDKGAHGPR) show a composition bias toward basic and acidic residues. Residues 70–79 (VSGNQHTPSH) are compositionally biased toward polar residues.

Interacts with PER2, CRY2, BHLHE41, HDAC1 and NR3C1. Interacts with BMAL1.

It is found in the nucleus. The protein resides in the PML body. Its function is as follows. Transcriptional repressor which forms a negative regulatory component of the circadian clock and acts independently of the circadian transcriptional repressors: CRY1, CRY2 and BHLHE41. In a histone deacetylase-dependent manner represses the transcriptional activator activity of the CLOCK-BMAL1 heterodimer. Abrogates the interaction of BMAL1 with the transcriptional coactivator CREBBP and can repress the histone acetyl-transferase activity of the CLOCK-BMAL1 heterodimer, reducing histone acetylation of its target genes. Rhythmically binds the E-box elements (5'-CACGTG-3') on circadian gene promoters and its occupancy shows circadian oscillation antiphasic to BMAL1. Interacts with the glucocorticoid receptor (NR3C1) and contributes to the repressive function in the glucocorticoid response. The protein is Circadian-associated transcriptional repressor (CIART) of Homo sapiens (Human).